Consider the following 500-residue polypeptide: NADH-quinone oxidoreductase subunit N (500 aa).

Transmembrane regions (helical) follow at residues 13 to 33, 42 to 62, 79 to 99, 111 to 131, 133 to 153, 168 to 188, 211 to 231, 245 to 265, 281 to 301, 321 to 341, 342 to 362, 386 to 406, 424 to 444, and 461 to 481; these read VMMPEFIILGVAVALSLIDLF, LLGLFAFVGIAVSFVSLLSLW, FAKSFKALLLIGSALVLLLSI, GEFYYLFLTALLGAMMMASSG, LITLFVGLELLSISSYILVAI, VITGSIATAITLFGMSYIFGF, YVLSLAFLLTFVGLSFKLASA, TTPVVSFLSVVSKTAGFVIVL, ASMLMTFAPYIAFLSGATMII, VAHAGYVLVAFASLSMFMFEA, IWFYLLAYVFMTIGAFAILQV, AIAMTIFLLSLAGIPGTAGFI, VLASIMVITTIISYVYYFGIF, and PPGVIAVVVICVIGTVLLGVF.

Belongs to the complex I subunit 2 family. As to quaternary structure, NDH-1 is composed of 14 different subunits. Subunits NuoA, H, J, K, L, M, N constitute the membrane sector of the complex.

It localises to the cell membrane. It catalyses the reaction a quinone + NADH + 5 H(+)(in) = a quinol + NAD(+) + 4 H(+)(out). Its function is as follows. NDH-1 shuttles electrons from NADH, via FMN and iron-sulfur (Fe-S) centers, to quinones in the respiratory chain. The immediate electron acceptor for the enzyme in this species is believed to be a menaquinone. Couples the redox reaction to proton translocation (for every two electrons transferred, four hydrogen ions are translocated across the cytoplasmic membrane), and thus conserves the redox energy in a proton gradient. The polypeptide is NADH-quinone oxidoreductase subunit N (Anoxybacillus flavithermus (strain DSM 21510 / WK1)).